Consider the following 641-residue polypeptide: Bilirubin reductase (641 aa).

Gln-96 provides a ligand contact to FMN. Catalysis depends on Arg-167, which acts as the Proton donor. FMN-binding positions include Lys-214, Arg-295, and 317-318 (GR). Residues Cys-341, Cys-344, Cys-348, and Cys-360 each coordinate [4Fe-4S] cluster. The FAD site is built by Ala-391, Glu-410, Gln-418, Lys-428, and Ala-455.

The protein in the N-terminal section; belongs to the NADH:flavin oxidoreductase/NADH oxidase family. FAD is required as a cofactor. It depends on FMN as a cofactor. [4Fe-4S] cluster serves as cofactor.

The enzyme catalyses urobilinogen + 4 A = (4Z,15Z)-bilirubin IXalpha + 4 AH2. The catalysed reaction is urobilinogen + 2 A = (4Z,15Z)-mesobilirubin IXalpha + 2 AH2. The protein operates within porphyrin-containing compound metabolism; protoheme degradation. Bilirubin reductase that catalyzes reduction of mesobilirubin and/or bilirubin to urobilinogen, a key step during heme degradation. Urobilinogen then spontaneously degrades into urobilin, which gives urine its distinctive yellow color. In Mediterraneibacter gnavus (strain CC55_001C), this protein is Bilirubin reductase.